Here is a 293-residue protein sequence, read N- to C-terminus: Cytidine deaminase 8 (293 aa).

CMP/dCMP-type deaminase domains lie at 20-151 (FTPQ…LISQ) and 181-293 (EHCN…LHCK). Position 61 to 63 (61 to 63 (NVE)) interacts with substrate. His-74 lines the Zn(2+) pocket. Glu-76 functions as the Proton donor in the catalytic mechanism. Zn(2+)-binding residues include Cys-107 and Cys-110.

This sequence belongs to the cytidine and deoxycytidylate deaminase family. In terms of assembly, homodimer. Requires Zn(2+) as cofactor.

The catalysed reaction is cytidine + H2O + H(+) = uridine + NH4(+). The enzyme catalyses 2'-deoxycytidine + H2O + H(+) = 2'-deoxyuridine + NH4(+). In terms of biological role, this enzyme scavenges exogenous and endogenous cytidine and 2'-deoxycytidine for UMP synthesis. This Arabidopsis thaliana (Mouse-ear cress) protein is Cytidine deaminase 8 (CDA8).